A 229-amino-acid polypeptide reads, in one-letter code: MSSLREIILDTETTGLDPQQGHRIIEIGAIEMVNKVLTGKHFHCYINPERDMPFEAYKIHGISGEFLKDKPLFHTIANDFLKFIADSTLIIHNAPFDIKFLNHELSLLKRTEIKFLELTNTIDTLVMARSMFPGARYSLDALCKRFKVDNSGRQLHGALKDAALLAEVYVALTGGRQSTFKMIDKPNEINNLTVKCIEVQKIKRSIVVKPTKEELQKHKEFIDKILIQA.

Residues Asp10 and Glu12 each contribute to the a divalent metal cation site. 4 residues coordinate substrate: Asp10, Glu12, Glu55, and His60. The active-site Proton acceptor is His156. An a divalent metal cation-binding site is contributed by Asp161. A substrate-binding site is contributed by Asp161.

In terms of assembly, DNA polymerase III contains a core (composed of alpha, epsilon and theta chains) that associates with a tau subunit. This core dimerizes to form the POLIII' complex. PolIII' associates with the gamma complex (composed of gamma, delta, delta', psi and chi chains) and with the beta chain to form the complete DNA polymerase III complex. The cofactor is Mg(2+). It depends on Mn(2+) as a cofactor.

It carries out the reaction DNA(n) + a 2'-deoxyribonucleoside 5'-triphosphate = DNA(n+1) + diphosphate. Its function is as follows. DNA polymerase III is a complex, multichain enzyme responsible for most of the replicative synthesis in bacteria. The epsilon subunit contain the editing function and is a proofreading 3'-5' exonuclease. This Rickettsia typhi (strain ATCC VR-144 / Wilmington) protein is DNA polymerase III subunit epsilon (dnaQ).